Reading from the N-terminus, the 288-residue chain is MPVEEFVAGWISGALGLVLGHPFDTVKVRLQTQTTYRGIVDCMVKIYRHESLLGFFKGMSFPIASIAVVNSVLFGVYSNTLLVLTATSHQERRAQPPSYMHIFLAGCTGGFLQAYCLAPFDLIKVRLQNQTEPRAQPGSPPPRYQGPVHCAASIFREEGPRGLFRGAWALTLRDTPTVGIYFITYEGLCRQYTPEGQNPSSATVLVAGGFAGIASWVAATPLDMIKSRMQMDGLRRRVYQGMLDCMVSSIRQEGLGVFFRGVTINSARAFPVNAVTFLSYEYLLRWWG.

3 Solcar repeats span residues 1 to 83 (MPVE…TLLV), 97 to 191 (PSYM…LCRQ), and 199 to 286 (PSSA…LLRW). The next 6 helical transmembrane spans lie at 6–26 (FVAG…FDTV), 63–83 (IASI…TLLV), 100–120 (MHIF…LAPF), 166–186 (GAWA…ITYE), 202–222 (ATVL…ATPL), and 266–286 (SARA…LLRW).

This sequence belongs to the mitochondrial carrier (TC 2.A.29) family.

Its subcellular location is the mitochondrion inner membrane. The protein is Solute carrier family 25 member 45 (SLC25A45) of Homo sapiens (Human).